A 505-amino-acid chain; its full sequence is ATP synthase subunit alpha, chloroplastic (505 aa).

An ATP-binding site is contributed by 170–177; the sequence is GDRQTGKT.

This sequence belongs to the ATPase alpha/beta chains family. As to quaternary structure, F-type ATPases have 2 components, CF(1) - the catalytic core - and CF(0) - the membrane proton channel. CF(1) has five subunits: alpha(3), beta(3), gamma(1), delta(1), epsilon(1). CF(0) has four main subunits: a, b, b' and c.

The protein localises to the plastid. The protein resides in the chloroplast thylakoid membrane. The enzyme catalyses ATP + H2O + 4 H(+)(in) = ADP + phosphate + 5 H(+)(out). Produces ATP from ADP in the presence of a proton gradient across the membrane. The alpha chain is a regulatory subunit. This is ATP synthase subunit alpha, chloroplastic from Mesostigma viride (Green alga).